A 152-amino-acid polypeptide reads, in one-letter code: Transcriptional repressor NrdR (152 aa).

A zinc finger lies at 3–34 (CPYCQHPDSDVIDTRKLHNGETIRRRRKCEAC). An ATP-cone domain is found at 49 to 139 (ITVVKKNGER…VYRSFADIGK (91 aa)).

Belongs to the NrdR family. Zn(2+) is required as a cofactor.

Negatively regulates transcription of bacterial ribonucleotide reductase nrd genes and operons by binding to NrdR-boxes. The polypeptide is Transcriptional repressor NrdR (Roseiflexus sp. (strain RS-1)).